A 265-amino-acid polypeptide reads, in one-letter code: ITHLIVCTTSVDMPGADYQLTKLLGLRPYVKRYMMYQQGCFAGGTVLRLAKDLAENNKGARVLVVCSEVTAVTFRGPSDTHLDSLVGQALFGDGAAALIVGSDPVPEIEKPIFEMVWTAQTIAPDSEGAIDGHLREAGLTFHLLKDVPGIVSKNINKALVEAFEPLGISDYNSIFWIAHPGGPAILDQVEQKLALKPEKMKATREVLSEYGNMSSACVLFILDEMRKKSAQDGLKTTGEGLEWGVLFGFGPGLTIETVVLRSVTI.

The active site involves C40.

This sequence belongs to the thiolase-like superfamily. Chalcone/stilbene synthases family.

It carries out the reaction (E)-4-coumaroyl-CoA + 3 malonyl-CoA + 3 H(+) = 2',4,4',6'-tetrahydroxychalcone + 3 CO2 + 4 CoA. It participates in secondary metabolite biosynthesis; flavonoid biosynthesis. Its function is as follows. The primary product of this enzyme is 4,2',4',6'-tetrahydroxychalcone (also termed naringenin-chalcone or chalcone) which can under specific conditions spontaneously isomerize into naringenin. This Medicago sativa (Alfalfa) protein is Chalcone synthase (CHSII).